The following is an 843-amino-acid chain: Taste receptor type 1 member 2 (843 aa).

Positions 1–19 (MGPQARTLHLLFLLLHALP) are cleaved as a signal peptide. Residues 20–570 (KPVMLVGNSD…AFLEWHEVPT (551 aa)) lie on the Extracellular side of the membrane. N-linked (GlcNAc...) asparagine glycosylation is found at Asn87, Asn296, Asn316, Asn355, Asn372, Asn432, Asn484, Asn491, and Asn531. A helical transmembrane segment spans residues 571–591 (IVVTILAALGFISTLAILLIF). The Cytoplasmic portion of the chain corresponds to 592-606 (WRHFQTPMVRSAGGP). Residues 607-627 (MCFLMLVPLLLAFGMVPVYVG) traverse the membrane as a helical segment. The Extracellular segment spans residues 628–642 (PPTVFSCFCRQAFFT). The helical transmembrane segment at 643 to 663 (VCFSVCLSCITVRSFQIVCVF) threads the bilayer. At 664 to 682 (KMARRLPSAYGFWMRYHGP) the chain is on the cytoplasmic side. The chain crosses the membrane as a helical span at residues 683 to 703 (YVFVAFITAVKVALVAGNMLA). Residues 704–731 (TTINPIGRTDPDDPNIIILSCHPNYRNG) are Extracellular-facing. A helical membrane pass occupies residues 732 to 752 (LLFNTSMDLLLSVLGFSFAYV). Residues 753–764 (GKELPTNYNEAK) lie on the Cytoplasmic side of the membrane. A helical transmembrane segment spans residues 765 to 785 (FITLSMTFSFTSSISLCTFMS). Over 786–789 (VHDG) the chain is Extracellular. A helical transmembrane segment spans residues 790–810 (VLVTIMDLLVTVLNFLAIGLG). Residues 811 to 843 (YFGPKCYMILFYPERNTSAYFNSMIQGYTMRKS) lie on the Cytoplasmic side of the membrane.

The protein belongs to the G-protein coupled receptor 3 family. TAS1R subfamily. In terms of assembly, forms heterodimers with TAS1R3. In terms of tissue distribution, expressed mainly in circumvallate and foliate taste papillae.

The protein resides in the cell membrane. Putative taste receptor. TAS1R2/TAS1R3 recognizes diverse natural and synthetic sweeteners. This is Taste receptor type 1 member 2 (Tas1r2) from Mus musculus (Mouse).